The following is a 265-amino-acid chain: Capsule polysaccharide export inner-membrane protein BexB (265 aa).

The next 6 membrane-spanning stretches (helical) occupy residues 37 to 57, 64 to 84, 121 to 141, 148 to 168, 178 to 198, and 235 to 255; these read IGFL…VMMW, KFST…AMMW, VAGA…IGWI, FYML…GLII, FGKI…AFFF, and ESIG…LVMV. The 222-residue stretch at 37-258 folds into the ABC transmembrane type-2 domain; it reads IGFLWLFVEP…LMGLVMVKNF (222 aa).

Belongs to the ABC-2 integral membrane protein family.

It is found in the cell inner membrane. May form an ATP-driven capsule polysaccharide export apparatus, in association with the BexA, BexC and BexD proteins. The chain is Capsule polysaccharide export inner-membrane protein BexB (bexB) from Haemophilus influenzae.